The chain runs to 775 residues: Chondroitin sulfate synthase 2 (775 aa).

Over 1 to 15 (MRASLLLSVLRPAGP) the chain is Cytoplasmic. Residues 16–34 (VAVGISLGFTLSLLSVTWV) form a helical; Signal-anchor for type II membrane protein membrane-spanning segment. Residues 35–775 (EEPCGPGPPQ…LFEQEQGNST (741 aa)) lie on the Lumenal side of the membrane. The tract at residues 37–100 (PCGPGPPQPG…YHPAQPGQAA (64 aa)) is disordered. A compositionally biased stretch (polar residues) spans 54-66 (GNTNAARRPNSVQ). N-linked (GlcNAc...) asparagine glycans are attached at residues Asn-138 and Asn-361. Asp-617 contributes to the a divalent metal cation binding site.

It belongs to the chondroitin N-acetylgalactosaminyltransferase family. In terms of assembly, interacts with PRKN. Mn(2+) serves as cofactor. It depends on Co(2+) as a cofactor. Ubiquitous. Highly expressed in pancreas, ovary, brain, heart, skeletal muscle, colon, kidney, liver, stomach, spleen and placenta. As to expression, expressed in brain, spleen, ovary, testis, lung and peripheral mononuclear cells. In terms of tissue distribution, also ubiquitous.

It localises to the golgi apparatus. It is found in the golgi stack membrane. The protein resides in the cytoplasm. The protein localises to the cytosol. Its subcellular location is the mitochondrion. It localises to the mitochondrion matrix. The enzyme catalyses 3-O-(beta-D-GlcA-(1-&gt;3)-beta-D-GalNAc-(1-&gt;4)-beta-D-GlcA-(1-&gt;3)-beta-D-Gal-(1-&gt;3)-beta-D-Gal-(1-&gt;4)-beta-D-Xyl)-L-seryl-[protein] + UDP-N-acetyl-alpha-D-galactosamine = 3-O-(beta-D-GalNAc-(1-&gt;4)-beta-D-GlcA-(1-&gt;3)-beta-D-GalNAc-(1-&gt;4)-beta-D-GlcA-(1-&gt;3)-beta-D-Gal-(1-&gt;3)-beta-D-Gal-(1-&gt;4)-beta-D-Xyl)-L-seryl-[protein] + UDP + H(+). The catalysed reaction is 3-O-{beta-D-GlcA-(1-&gt;3)-[beta-D-GalNAc-(1-&gt;4)-beta-D-GlcA-(1-&gt;3)](n)-beta-D-GalNAc-(1-&gt;4)-beta-D-GlcA-(1-&gt;3)-beta-D-Gal-(1-&gt;3)-beta-D-Gal-(1-&gt;4)-beta-D-Xyl}-L-seryl-[protein] + UDP-N-acetyl-alpha-D-galactosamine = 3-O-{[beta-D-GalNAc-(1-&gt;4)-beta-D-GlcA-(1-&gt;3)](n+1)-beta-D-GalNAc-(1-&gt;4)-beta-D-GlcA-(1-&gt;3)-beta-D-Gal-(1-&gt;3)-beta-D-Gal-(1-&gt;4)-beta-D-Xyl}-L-seryl-[protein] + UDP + H(+). It catalyses the reaction 3-O-(beta-D-GalNAc-(1-&gt;4)-beta-D-GlcA-(1-&gt;3)-beta-D-Gal-(1-&gt;3)-beta-D-Gal-(1-&gt;4)-beta-D-Xyl)-L-seryl-[protein] + UDP-alpha-D-glucuronate = 3-O-(beta-D-GlcA-(1-&gt;3)-beta-D-GalNAc-(1-&gt;4)-beta-D-GlcA-(1-&gt;3)-beta-D-Gal-(1-&gt;3)-beta-D-Gal-(1-&gt;4)-beta-D-Xyl)-L-seryl-[protein] + UDP + H(+). It carries out the reaction 3-O-{[beta-D-GalNAc-(1-&gt;4)-beta-D-GlcA-(1-&gt;3)](n)-beta-D-GalNAc-(1-&gt;4)-beta-D-GlcA-(1-&gt;3)-beta-D-Gal-(1-&gt;3)-beta-D-Gal-(1-&gt;4)-beta-D-Xyl}-L-seryl-[protein] + UDP-alpha-D-glucuronate = 3-O-{beta-D-GlcA-(1-&gt;3)-[beta-D-GalNAc-(1-&gt;4)-beta-D-GlcA-(1-&gt;3)](n)-beta-D-GalNAc-(1-&gt;4)-beta-D-GlcA-(1-&gt;3)-beta-D-Gal-(1-&gt;3)-beta-D-Gal-(1-&gt;4)-beta-D-Xyl}-L-seryl-[protein] + UDP + H(+). Has both beta-1,3-glucuronic acid and beta-1,4-N-acetylgalactosamine transferase activity. Transfers glucuronic acid (GlcUA) from UDP-GlcUA and N-acetylgalactosamine (GalNAc) from UDP-GalNAc to the non-reducing end of the elongating chondroitin polymer. Seems to act as a specific activating factor for CHSY1 in chondroitin polymerization. Its function is as follows. May facilitate PRKN transport into the mitochondria. In collaboration with PRKN, may enhance cell viability and protect cells from oxidative stress. This chain is Chondroitin sulfate synthase 2, found in Homo sapiens (Human).